Here is a 294-residue protein sequence, read N- to C-terminus: Porphobilinogen deaminase (294 aa).

Cysteine 232 bears the S-(dipyrrolylmethanemethyl)cysteine mark.

The protein belongs to the HMBS family. Monomer. It depends on dipyrromethane as a cofactor.

It carries out the reaction 4 porphobilinogen + H2O = hydroxymethylbilane + 4 NH4(+). The protein operates within porphyrin-containing compound metabolism; protoporphyrin-IX biosynthesis; coproporphyrinogen-III from 5-aminolevulinate: step 2/4. Tetrapolymerization of the monopyrrole PBG into the hydroxymethylbilane pre-uroporphyrinogen in several discrete steps. The sequence is that of Porphobilinogen deaminase from Corynebacterium diphtheriae (strain ATCC 700971 / NCTC 13129 / Biotype gravis).